A 364-amino-acid polypeptide reads, in one-letter code: Methylthioribose-1-phosphate isomerase (364 aa).

Asp-254 acts as the Proton donor in catalysis.

It belongs to the eIF-2B alpha/beta/delta subunits family. MtnA subfamily.

It localises to the cytoplasm. It is found in the nucleus. The catalysed reaction is 5-(methylsulfanyl)-alpha-D-ribose 1-phosphate = 5-(methylsulfanyl)-D-ribulose 1-phosphate. It functions in the pathway amino-acid biosynthesis; L-methionine biosynthesis via salvage pathway; L-methionine from S-methyl-5-thio-alpha-D-ribose 1-phosphate: step 1/6. Its function is as follows. Catalyzes the interconversion of methylthioribose-1-phosphate (MTR-1-P) into methylthioribulose-1-phosphate (MTRu-1-P). This Drosophila simulans (Fruit fly) protein is Methylthioribose-1-phosphate isomerase.